Consider the following 127-residue polypeptide: Putative B3 domain-containing protein At4g12617 (127 aa).

The TF-B3 DNA-binding region spans 35–127 (IMMPKTLLEA…HTRLNFKHVA (93 aa)).

It localises to the nucleus. This chain is Putative B3 domain-containing protein At4g12617, found in Arabidopsis thaliana (Mouse-ear cress).